The following is a 257-amino-acid chain: Imidazole glycerol phosphate synthase subunit HisF (257 aa).

Residues Asp12 and Asp131 contribute to the active site.

It belongs to the HisA/HisF family. In terms of assembly, heterodimer of HisH and HisF.

Its subcellular location is the cytoplasm. The enzyme catalyses 5-[(5-phospho-1-deoxy-D-ribulos-1-ylimino)methylamino]-1-(5-phospho-beta-D-ribosyl)imidazole-4-carboxamide + L-glutamine = D-erythro-1-(imidazol-4-yl)glycerol 3-phosphate + 5-amino-1-(5-phospho-beta-D-ribosyl)imidazole-4-carboxamide + L-glutamate + H(+). Its pathway is amino-acid biosynthesis; L-histidine biosynthesis; L-histidine from 5-phospho-alpha-D-ribose 1-diphosphate: step 5/9. Its function is as follows. IGPS catalyzes the conversion of PRFAR and glutamine to IGP, AICAR and glutamate. The HisF subunit catalyzes the cyclization activity that produces IGP and AICAR from PRFAR using the ammonia provided by the HisH subunit. The protein is Imidazole glycerol phosphate synthase subunit HisF of Hydrogenovibrio crunogenus (strain DSM 25203 / XCL-2) (Thiomicrospira crunogena).